The primary structure comprises 170 residues: Myelin-associated oligodendrocyte basic protein (170 aa).

Residues 69-170 (SRRATSPQKP…GSPTRAPRFW (102 aa)) are disordered. Over residues 82–92 (PAASPVVVRAP) the composition is skewed to low complexity. A phosphoserine mark is found at S85, S98, and S107. Repeat unit 1 spans residues 93-101 (PAKPKSPPR). Positions 93–114 (PAKPKSPPRPAKPRSPPIPAKP) are enriched in pro residues. The 3 X 9 AA approximate tandem repeats stretch occupies residues 93 to 119 (PAKPKSPPRPAKPRSPPIPAKPRSPSR). Residues 105–110 (PRSPPI) form a 2; half-length repeat. Residues 111 to 119 (PAKPRSPSR) form repeat 3. Residues 118 to 130 (SRTERQPRPRPEV) show a composition bias toward basic and acidic residues. Residues 138-151 (KPPQKSKQPARSSP) are compositionally biased toward low complexity.

Expressed predominantly in oligodendrocytes, in CNS myelin of the cerebrum and spinal cord. No expression seen in sciatic nerve.

The protein localises to the cytoplasm. It is found in the perinuclear region. In terms of biological role, may play a role in compacting or stabilizing the myelin sheath, possibly by binding the negatively charged acidic phospholipids of the cytoplasmic membrane. In Rattus norvegicus (Rat), this protein is Myelin-associated oligodendrocyte basic protein (Mobp).